A 271-amino-acid polypeptide reads, in one-letter code: Undecaprenyl-diphosphatase (271 aa).

Transmembrane regions (helical) follow at residues 5-25, 45-65, 86-106, 114-134, 149-169, 189-209, 226-246, and 251-271; these read YALF…FLPV, AATF…AVFW, TLSL…GLGI, LFGP…LIIA, ISYK…WPGF, AAEF…GLDL, VGFI…LALI, and FIPF…VFVA.

The protein belongs to the UppP family.

Its subcellular location is the cell inner membrane. It carries out the reaction di-trans,octa-cis-undecaprenyl diphosphate + H2O = di-trans,octa-cis-undecaprenyl phosphate + phosphate + H(+). In terms of biological role, catalyzes the dephosphorylation of undecaprenyl diphosphate (UPP). Confers resistance to bacitracin. This is Undecaprenyl-diphosphatase from Aeromonas salmonicida (strain A449).